The following is a 1956-amino-acid chain: Sodium channel protein type 10 subunit alpha (1956 aa).

Residues 1–125 (MELPFASVGT…FNLIRRTAIK (125 aa)) lie on the Cytoplasmic side of the membrane. Residues 31 to 54 (HRAAKKARTKHRGQEDKGEKPRPQ) form a disordered region. The segment covering 32 to 41 (RAAKKARTKH) has biased composition (basic residues). Over residues 42–54 (RGQEDKGEKPRPQ) the composition is skewed to basic and acidic residues. The I repeat unit spans residues 116–404 (FNLIRRTAIK…VTMAYEEQSQ (289 aa)). A helical transmembrane segment spans residues 126–149 (VSVHSWFSIFITITILVNCVCMTR). The Extracellular portion of the chain corresponds to 150-154 (TDLPE). The chain crosses the membrane as a helical span at residues 155-174 (KVEYVFTVIYTFEALIKILA). At 175–187 (RGFCLNEFTYLRD) the chain is on the cytoplasmic side. A helical transmembrane segment spans residues 188 to 206 (PWNWLDFSVITLAYVGAAI). The Extracellular portion of the chain corresponds to 207–212 (DLRGIS). The chain crosses the membrane as a helical; Voltage-sensor span at residues 213-232 (GLRTFRVLRALKTVSVIPGL). Residues 233-248 (KVIVGALIHSVRKLAD) are Cytoplasmic-facing. A helical membrane pass occupies residues 249–272 (VTILTVFCLSVFALVGLQLFKGNL). Over 273–340 (KNKCIRNGTD…PDFNYTSFDS (68 aa)) the chain is Extracellular. A disulfide bond links cysteine 276 and cysteine 318. N-linked (GlcNAc...) asparagine glycans are attached at residues asparagine 279, asparagine 288, asparagine 311, and asparagine 334. The pore-forming intramembrane region spans 341–365 (FAWAFLSLFRLMTQDSWERLYQQTL). The Extracellular portion of the chain corresponds to 366 to 372 (RASGKMY). The chain crosses the membrane as a helical span at residues 373–398 (MVFFVLVIFLGSFYLVNLILAVVTMA). The Cytoplasmic portion of the chain corresponds to 399-658 (YEEQSQATIA…KWRKFKMALF (260 aa)). A phosphoserine mark is found at serine 440, serine 443, serine 466, and serine 478. A compositionally biased stretch (polar residues) spans 441–453 (LQSHSGSPLASKN). 2 disordered regions span residues 441–484 (LQSH…YNQR) and 537–581 (LLGR…AGAP). Residues 475–484 (SPQSDPYNQR) are compositionally biased toward polar residues. 2 positions are modified to phosphoserine: serine 611 and serine 614. The II repeat unit spans residues 646–910 (CCPKWRKFKM…EDDGEVNNLQ (265 aa)). Residues 659 to 683 (ELVTDPFAELTITLCIVVNTVFMAM) form a helical membrane-spanning segment. Over 684–694 (EHYPMTDAFDA) the chain is Extracellular. A helical transmembrane segment spans residues 695–718 (MLQAGNIVFTVFFTMEMAFKIIAF). The Cytoplasmic portion of the chain corresponds to 719-726 (DPYYYFQK). A helical membrane pass occupies residues 727 to 746 (KWNIFDCVIVTVSLLELSAS). The Extracellular portion of the chain corresponds to 747-752 (KKGSLS). A helical; Voltage-sensor membrane pass occupies residues 753 to 772 (VLRTFRLLRVFKLAKSWPTL). At 773-788 (NTLIKIIGNSVGALGN) the chain is on the cytoplasmic side. The helical transmembrane segment at 789–809 (LTFILAIIVFIFALVGKQLLS) threads the bilayer. Over 810–833 (EDYGCRKDGVSVWNGEKLRWHMCD) the chain is Extracellular. Positions 834 to 854 (FFHSFLVVFRILCGEWIENMW) form an intramembrane region, pore-forming. Residues 855–863 (VCMEVSQKS) are Extracellular-facing. Cysteines 856 and 865 form a disulfide. The chain crosses the membrane as a helical span at residues 864 to 889 (ICLILFLTVMVLGNLVVLNLFIALLL). The Cytoplasmic portion of the chain corresponds to 890 to 1148 (NSFSADNLTA…GWQVRKTCYR (259 aa)). A disordered region spans residues 1008–1094 (DELEEDMEQA…SEGSTVDCPD (87 aa)). One copy of the III repeat lies at 1141-1450 (QVRKTCYRIV…KKYYNAMKKL (310 aa)). Residues 1149-1172 (IVEHSWFESFIIFMILLSSGALAF) traverse the membrane as a helical segment. Over 1173-1185 (EDNYLEEKPRVKS) the chain is Extracellular. The chain crosses the membrane as a helical span at residues 1186–1211 (VLEYTDRVFTFIFVFEMLLKWVAYGF). Topologically, residues 1212–1217 (KKYFTN) are cytoplasmic. A helical transmembrane segment spans residues 1218 to 1239 (AWCWLDFLIVNISLTSLIAKIL). Topologically, residues 1240–1243 (EYSD) are extracellular. Residues 1244–1265 (VASIKALRTLRALRPLRALSRF) traverse the membrane as a helical; Voltage-sensor segment. Topologically, residues 1266 to 1284 (EGMRVVVDALVGAIPSIMN) are cytoplasmic. Residues 1285–1312 (VLLVCLIFWLIFSIMGVNLFAGKFSKCV) traverse the membrane as a helical segment. The Extracellular segment spans residues 1313–1354 (DTRNNPFSNVNSTMVNNKSECHNQNSTGHFFWVNVKVNFDNV). N-linked (GlcNAc...) asparagine glycosylation is found at asparagine 1323, asparagine 1329, and asparagine 1337. Positions 1355–1376 (AMGYLALLQVATFKGWMDIMYA) form an intramembrane region, pore-forming. Residues 1377–1392 (AVDSGEINSQPNWENN) lie on the Extracellular side of the membrane. Residues 1393–1419 (LYMYLYFVVFIIFGGFFTLNLFVGVII) form a helical membrane-spanning segment. At 1420–1472 (DNFNQQKKKLGGQDIFMTEEQKKYYNAMKKLGSKKPQKPIPRPLNKYQGFVFD) the chain is on the cytoplasmic side. Serine 1452 carries the phosphoserine; by PKC modification. An IV repeat occupies 1459–1758 (IPRPLNKYQG…WEKFDPEATQ (300 aa)). The chain crosses the membrane as a helical span at residues 1473-1496 (IVTRQAFDIIIMVLICLNMITMMV). At 1497-1507 (ETDEQGEEKTK) the chain is on the extracellular side. The chain crosses the membrane as a helical span at residues 1508–1531 (VLGRINQFFVAVFTGECVMKMFAL). Over 1532–1537 (RQYYFT) the chain is Cytoplasmic. A helical membrane pass occupies residues 1538–1561 (NGWNVFDFIVVILSIGSLLFSAIL). The Extracellular portion of the chain corresponds to 1562–1573 (KSLENYFSPTLF). A helical; Voltage-sensor membrane pass occupies residues 1574-1595 (RVIRLARIGRILRLIRAAKGIR). Residues 1596–1610 (TLLFALMMSLPALFN) lie on the Cytoplasmic side of the membrane. A helical transmembrane segment spans residues 1611 to 1633 (IGLLLFLVMFIYSIFGMASFANV). Residues 1634 to 1647 (VDEAGIDDMFNFKT) are Extracellular-facing. Residues 1648 to 1670 (FGNSMLCLFQITTSAGWDGLLSP) constitute an intramembrane region (pore-forming). The Extracellular portion of the chain corresponds to 1671–1698 (ILNTGPPYCDPNLPNSNGSRGNCGSPAV). Asparagine 1687 is a glycosylation site (N-linked (GlcNAc...) asparagine). Residues 1699–1723 (GIIFFTTYIIISFLIVVNMYIAVIL) form a helical membrane-spanning segment. Topologically, residues 1724–1956 (ENFNVATEES…AKEGNSPGPQ (233 aa)) are cytoplasmic. The 30-residue stretch at 1852 to 1881 (EDLSATVIQKAYRSYMLHRSLTLSNTLHVP) folds into the IQ domain. Residues 1906 to 1956 (DKSETASATSFPPSYDSVTRGLSDRANINPSSSMQNEDEVAAKEGNSPGPQ) are disordered. Positions 1931–1940 (ANINPSSSMQ) are enriched in polar residues.

Belongs to the sodium channel (TC 1.A.1.10) family. Nav1.8/SCN10A subfamily. In terms of assembly, the channel consists of an ion conducting pore forming alpha-subunit regulated by one or more associated auxiliary subunits SCN1B, SCN2B and SCN3B; electrophysiological properties may vary depending on the type of the associated beta subunits. Found in a number of complexes with PRX, DYNLT1 and PDZD2. Interacts with proteins such as FSTL1, PRX, DYNLT1, PDZD2, S100A10 and many others. Interacts with NEDD4 and NEDD4L. Post-translationally, ubiquitinated by NEDD4L; which promotes its endocytosis. In terms of processing, phosphorylation at Ser-1452 by PKC in a highly conserved cytoplasmic loop slows inactivation of the sodium channel and reduces peak sodium currents. Lacks the cysteine which covalently binds the conotoxin GVIIJ. This cysteine (position 815) is speculated in other sodium channel subunits alpha to be implied in covalent binding with the sodium channel subunit beta-2 or beta-4. In terms of tissue distribution, expressed in dorsal root ganglia, trigeminal ganglia, nodose ganglia and sciatic nerve.

Its subcellular location is the cell membrane. The catalysed reaction is Na(+)(in) = Na(+)(out). Tetrodotoxin-resistant channel that mediates the voltage-dependent sodium ion permeability of excitable membranes. Assuming opened or closed conformations in response to the voltage difference across the membrane, the protein forms a sodium-selective channel through which sodium ions may pass in accordance with their electrochemical gradient. Plays a role in neuropathic pain mechanisms. In Rattus norvegicus (Rat), this protein is Sodium channel protein type 10 subunit alpha.